We begin with the raw amino-acid sequence, 428 residues long: Histidine--tRNA ligase (428 aa).

This sequence belongs to the class-II aminoacyl-tRNA synthetase family. As to quaternary structure, homodimer.

The protein localises to the cytoplasm. It catalyses the reaction tRNA(His) + L-histidine + ATP = L-histidyl-tRNA(His) + AMP + diphosphate + H(+). This Mesomycoplasma hyopneumoniae (strain J / ATCC 25934 / NCTC 10110) (Mycoplasma hyopneumoniae) protein is Histidine--tRNA ligase.